A 240-amino-acid chain; its full sequence is UDP-2,3-diacylglucosamine hydrolase (240 aa).

5 residues coordinate Mn(2+): aspartate 8, histidine 10, aspartate 41, asparagine 79, and histidine 114. Asparagine 79–arginine 80 contacts substrate. Substrate is bound by residues aspartate 122, serine 160, asparagine 164, lysine 167, and histidine 195. The Mn(2+) site is built by histidine 195 and histidine 197.

It belongs to the LpxH family. Mn(2+) is required as a cofactor.

The protein resides in the cell inner membrane. It carries out the reaction UDP-2-N,3-O-bis[(3R)-3-hydroxytetradecanoyl]-alpha-D-glucosamine + H2O = 2-N,3-O-bis[(3R)-3-hydroxytetradecanoyl]-alpha-D-glucosaminyl 1-phosphate + UMP + 2 H(+). The protein operates within glycolipid biosynthesis; lipid IV(A) biosynthesis; lipid IV(A) from (3R)-3-hydroxytetradecanoyl-[acyl-carrier-protein] and UDP-N-acetyl-alpha-D-glucosamine: step 4/6. In terms of biological role, hydrolyzes the pyrophosphate bond of UDP-2,3-diacylglucosamine to yield 2,3-diacylglucosamine 1-phosphate (lipid X) and UMP by catalyzing the attack of water at the alpha-P atom. Involved in the biosynthesis of lipid A, a phosphorylated glycolipid that anchors the lipopolysaccharide to the outer membrane of the cell. This Escherichia coli O157:H7 protein is UDP-2,3-diacylglucosamine hydrolase.